Here is a 421-residue protein sequence, read N- to C-terminus: Stemmadenine O-acetyltransferase (421 aa).

The tract at residues 1-21 (MAPQMQILSEELIQPSSPTPQ) is disordered. Catalysis depends on proton acceptor residues H160 and D362.

The protein belongs to the plant acyltransferase family. Monomer. Expressed in leaf epidermis.

The catalysed reaction is 15alpha-stemmadenine + acetyl-CoA = O-acetyl-15alpha-stemmadenine + CoA. Its pathway is alkaloid biosynthesis. Component of iboga and aspidosperma monoterpenoid indole alkaloids (MIAs, e.g. tabersonine and catharanthine) biosynthesis pathway from 19E-geissoschizine. Acetyltransferase that catalyzes the formation of O-acetylstemmadenine from stemmadenine. The polypeptide is Stemmadenine O-acetyltransferase (Catharanthus roseus (Madagascar periwinkle)).